A 296-amino-acid polypeptide reads, in one-letter code: Ribosomal RNA small subunit methyltransferase H (296 aa).

Residues 38–40 (GAH), E57, F88, D103, and H110 each bind S-adenosyl-L-methionine.

This sequence belongs to the methyltransferase superfamily. RsmH family.

The protein resides in the cytoplasm. The catalysed reaction is cytidine(1402) in 16S rRNA + S-adenosyl-L-methionine = N(4)-methylcytidine(1402) in 16S rRNA + S-adenosyl-L-homocysteine + H(+). Specifically methylates the N4 position of cytidine in position 1402 (C1402) of 16S rRNA. This Borreliella afzelii (strain PKo) (Borrelia afzelii) protein is Ribosomal RNA small subunit methyltransferase H.